The chain runs to 227 residues: Cytochrome c oxidase subunit 2 (227 aa).

Residues methionine 1–serine 14 are Mitochondrial intermembrane-facing. The chain crosses the membrane as a helical span at residues proline 15–methionine 45. Residues leucine 46–glutamine 59 lie on the Mitochondrial matrix side of the membrane. A helical membrane pass occupies residues glutamate 60–methionine 87. Residues aspartate 88 to leucine 227 are Mitochondrial intermembrane-facing. Residues histidine 161, cysteine 196, glutamate 198, cysteine 200, histidine 204, and methionine 207 each coordinate Cu cation. Glutamate 198 provides a ligand contact to Mg(2+).

Belongs to the cytochrome c oxidase subunit 2 family. Component of the cytochrome c oxidase (complex IV, CIV), a multisubunit enzyme composed of 14 subunits. The complex is composed of a catalytic core of 3 subunits MT-CO1, MT-CO2 and MT-CO3, encoded in the mitochondrial DNA, and 11 supernumerary subunits COX4I, COX5A, COX5B, COX6A, COX6B, COX6C, COX7A, COX7B, COX7C, COX8 and NDUFA4, which are encoded in the nuclear genome. The complex exists as a monomer or a dimer and forms supercomplexes (SCs) in the inner mitochondrial membrane with NADH-ubiquinone oxidoreductase (complex I, CI) and ubiquinol-cytochrome c oxidoreductase (cytochrome b-c1 complex, complex III, CIII), resulting in different assemblies (supercomplex SCI(1)III(2)IV(1) and megacomplex MCI(2)III(2)IV(2)). Found in a complex with TMEM177, COA6, COX18, COX20, SCO1 and SCO2. Interacts with TMEM177 in a COX20-dependent manner. Interacts with COX20. Interacts with COX16. Cu cation is required as a cofactor.

The protein localises to the mitochondrion inner membrane. It carries out the reaction 4 Fe(II)-[cytochrome c] + O2 + 8 H(+)(in) = 4 Fe(III)-[cytochrome c] + 2 H2O + 4 H(+)(out). Component of the cytochrome c oxidase, the last enzyme in the mitochondrial electron transport chain which drives oxidative phosphorylation. The respiratory chain contains 3 multisubunit complexes succinate dehydrogenase (complex II, CII), ubiquinol-cytochrome c oxidoreductase (cytochrome b-c1 complex, complex III, CIII) and cytochrome c oxidase (complex IV, CIV), that cooperate to transfer electrons derived from NADH and succinate to molecular oxygen, creating an electrochemical gradient over the inner membrane that drives transmembrane transport and the ATP synthase. Cytochrome c oxidase is the component of the respiratory chain that catalyzes the reduction of oxygen to water. Electrons originating from reduced cytochrome c in the intermembrane space (IMS) are transferred via the dinuclear copper A center (CU(A)) of subunit 2 and heme A of subunit 1 to the active site in subunit 1, a binuclear center (BNC) formed by heme A3 and copper B (CU(B)). The BNC reduces molecular oxygen to 2 water molecules using 4 electrons from cytochrome c in the IMS and 4 protons from the mitochondrial matrix. The polypeptide is Cytochrome c oxidase subunit 2 (MT-CO2) (Lemur catta (Ring-tailed lemur)).